A 388-amino-acid chain; its full sequence is Fetuin-B (388 aa).

A signal peptide spans 1–18 (MGLLRLLVLCTLAACCMA). Cystatin fetuin-B-type domains are found at residues 28–141 (QRPL…YNCT) and 152–264 (TTCP…VTCE). Asn-40 carries an N-linked (GlcNAc...) asparagine glycan. 5 disulfides stabilise this stretch: Cys-96–Cys-107, Cys-120–Cys-140, Cys-154–Cys-157, Cys-217–Cys-224, and Cys-237–Cys-263. A glycan (N-linked (GlcNAc...) asparagine) is linked at Asn-139. Disordered stretches follow at residues 270-343 (AQVP…PQGD) and 367-388 (KEQR…VLPP). A compositionally biased stretch (polar residues) spans 279–300 (AVTQGPQKLPQKNTAPTSSPSV). O-linked (GalNAc...) threonine glycans are attached at residues Thr-292 and Thr-295. At Ser-321 the chain carries Phosphoserine. Residues 367–381 (KEQRSAECPGPEKEN) show a composition bias toward basic and acidic residues.

This sequence belongs to the fetuin family. As to expression, liver, lung and tongue.

The protein resides in the secreted. Functionally, protease inhibitor required for egg fertilization. Required to prevent premature zona pellucida hardening before fertilization, probably by inhibiting the protease activity of ASTL, a protease that mediates the cleavage of ZP2 and triggers zona pellucida hardening. In Mus musculus (Mouse), this protein is Fetuin-B (Fetub).